The sequence spans 88 residues: Large ribosomal subunit protein eL37 (88 aa).

Residues 1–24 (MTKGTTSFGKRHNKSHTQCRRCGR) form a disordered region. Over residues 9–24 (GKRHNKSHTQCRRCGR) the composition is skewed to basic residues. Positions 19, 22, 34, and 37 each coordinate Zn(2+). The C4-type zinc finger occupies 19–37 (CRRCGRKSYHIQKKTCSSC).

It belongs to the eukaryotic ribosomal protein eL37 family. Zn(2+) serves as cofactor.

Functionally, binds to the 23S rRNA. The sequence is that of Large ribosomal subunit protein eL37 (RPL37) from Schistosoma mansoni (Blood fluke).